Here is a 75-residue protein sequence, read N- to C-terminus: UPF0352 protein VF_1649 (75 aa).

The protein belongs to the UPF0352 family.

The chain is UPF0352 protein VF_1649 from Aliivibrio fischeri (strain ATCC 700601 / ES114) (Vibrio fischeri).